We begin with the raw amino-acid sequence, 253 residues long: Blue-light photoreceptor (253 aa).

The region spanning lysine 6 to lysine 79 is the PAS domain. S-4a-FMN cysteine is present on cysteine 56. The 54-residue stretch at serine 80–lysine 133 folds into the PAC domain. One can recognise an STAS domain in the interval serine 142–tyrosine 253.

Post-translationally, FMN binds covalently to cysteine after exposure to blue light and this bond is spontaneously broken in the dark.

Its function is as follows. Exhibits the same spectroscopical features and blue-light induced photochemistry as plants phototropins, with the reversible formation of a blue-shifted photoproduct, assigned to an FMN-cysteine thiol adduct. Positive regulator in the activation of the general stress transcription factor sigma-B. The chain is Blue-light photoreceptor from Listeria innocua serovar 6a (strain ATCC BAA-680 / CLIP 11262).